A 274-amino-acid polypeptide reads, in one-letter code: Shikimate dehydrogenase (NADP(+)) (274 aa).

Shikimate-binding positions include 14 to 16 and T61; that span reads SQS. K65 acts as the Proton acceptor in catalysis. Shikimate-binding residues include N86 and D102. NADP(+)-binding positions include 128–132, 151–156, and L215; these read GAGGA and NRTVEK. Residue Y217 participates in shikimate binding. G239 provides a ligand contact to NADP(+).

This sequence belongs to the shikimate dehydrogenase family. In terms of assembly, homodimer.

The enzyme catalyses shikimate + NADP(+) = 3-dehydroshikimate + NADPH + H(+). It participates in metabolic intermediate biosynthesis; chorismate biosynthesis; chorismate from D-erythrose 4-phosphate and phosphoenolpyruvate: step 4/7. Its function is as follows. Involved in the biosynthesis of the chorismate, which leads to the biosynthesis of aromatic amino acids. Catalyzes the reversible NADPH linked reduction of 3-dehydroshikimate (DHSA) to yield shikimate (SA). The protein is Shikimate dehydrogenase (NADP(+)) of Proteus mirabilis (strain HI4320).